Reading from the N-terminus, the 438-residue chain is Aspartate--tRNA(Asp) ligase (438 aa).

Glutamate 170 lines the L-aspartate pocket. The aspartate stretch occupies residues 192–195; sequence QLYK. Arginine 214 contributes to the L-aspartate binding site. ATP is bound by residues 214-216, 222-224, and glutamate 361; these read RAE and RHL. Positions 361 and 364 each coordinate Mg(2+). Serine 364 and arginine 368 together coordinate L-aspartate. An ATP-binding site is contributed by 409–412; sequence GAER.

It belongs to the class-II aminoacyl-tRNA synthetase family. Type 2 subfamily. As to quaternary structure, homodimer. Requires Mg(2+) as cofactor.

The protein localises to the cytoplasm. It catalyses the reaction tRNA(Asp) + L-aspartate + ATP = L-aspartyl-tRNA(Asp) + AMP + diphosphate. Functionally, catalyzes the attachment of L-aspartate to tRNA(Asp) in a two-step reaction: L-aspartate is first activated by ATP to form Asp-AMP and then transferred to the acceptor end of tRNA(Asp). Is specific for tRNA(Asp) since it aspartylates tRNA(Asn) 3 orders of magnitude less efficiently than tRNA(Asp). The polypeptide is Aspartate--tRNA(Asp) ligase (Thermococcus kodakarensis (strain ATCC BAA-918 / JCM 12380 / KOD1) (Pyrococcus kodakaraensis (strain KOD1))).